The following is a 276-amino-acid chain: Urease accessory protein UreD (276 aa).

Belongs to the UreD family. UreD, UreF and UreG form a complex that acts as a GTP-hydrolysis-dependent molecular chaperone, activating the urease apoprotein by helping to assemble the nickel containing metallocenter of UreC. The UreE protein probably delivers the nickel.

Its subcellular location is the cytoplasm. Its function is as follows. Required for maturation of urease via the functional incorporation of the urease nickel metallocenter. The chain is Urease accessory protein UreD from Polaromonas sp. (strain JS666 / ATCC BAA-500).